The primary structure comprises 478 residues: NAD(+) hydrolase ThsA (478 aa).

The region spanning M1–T287 is the Deacetylase sirtuin-type domain. Residues A19, D110, and H148 each contribute to the NAD(+) site. H148 serves as the catalytic Proton acceptor. Residues I288–D478 form an SLOG (STALD) domain region. Positions 292, 293, 330, 373, 390, 401, and 405 each coordinate 3'cADPR.

Belongs to the soluble Thoeris ThsA family. In terms of assembly, homotetramer in solution.

It catalyses the reaction NAD(+) + H2O = ADP-D-ribose + nicotinamide + H(+). Its activity is regulated as follows. Activated by 3'cADPR. NAD(+) hydrolyzing component (NADase) of the Thoeris antiviral defense system, composed of ThsA and ThsB (maybe AS248_15445). Activated by 3' cyclic ADP-D-ribose (3'cADPR) but not its isomers 2'cADPR, cADPR and very weakly by ADPR; binds 3'cADPR better than 2'cADPR. Upon activation binds and hydrolyzes NAD(+), leading to cell death and inhibition of phage replication. The chain is NAD(+) hydrolase ThsA from Enterococcus faecium (Streptococcus faecium).